A 243-amino-acid polypeptide reads, in one-letter code: Ribosomal RNA small subunit methyltransferase J (243 aa).

S-adenosyl-L-methionine-binding positions include E112–R113 and D164.

This sequence belongs to the methyltransferase superfamily. RsmJ family.

It localises to the cytoplasm. It carries out the reaction guanosine(1516) in 16S rRNA + S-adenosyl-L-methionine = N(2)-methylguanosine(1516) in 16S rRNA + S-adenosyl-L-homocysteine + H(+). In terms of biological role, specifically methylates the guanosine in position 1516 of 16S rRNA. The chain is Ribosomal RNA small subunit methyltransferase J from Legionella pneumophila (strain Corby).